Here is a 1041-residue protein sequence, read N- to C-terminus: DNA polymerase catalytic subunit (1041 aa).

Residues 1-23 are disordered; that stretch reads MAFFNPYFKSKNKGSDMPPKQSM.

Belongs to the DNA polymerase type-B family.

Its subcellular location is the host nucleus. It carries out the reaction DNA(n) + a 2'-deoxyribonucleoside 5'-triphosphate = DNA(n+1) + diphosphate. The catalysed reaction is Endonucleolytic cleavage to 5'-phosphomonoester.. In terms of biological role, replicates viral genomic DNA. The replication complex is composed of six viral proteins: the DNA polymerase, processivity factor, primase, primase-associated factor, helicase, and ssDNA-binding protein. Additionally, the polymerase contains an intrinsic ribonuclease H (RNase H) activity that specifically degrades RNA/DNA heteroduplexes or duplex DNA substrates in the 5' to 3' direction. Therefore, it can catalyze the excision of the RNA primers that initiate the synthesis of Okazaki fragments at a replication fork during viral DNA replication. In Elephantid herpesvirus 1 (isolate Asian elephant/Berlin/Kiba/1998) (EIHV-1), this protein is DNA polymerase catalytic subunit.